We begin with the raw amino-acid sequence, 169 residues long: S-ribosylhomocysteine lyase (169 aa).

Fe cation contacts are provided by His54, His58, and Cys129.

Belongs to the LuxS family. Homodimer. The cofactor is Fe cation.

The enzyme catalyses S-(5-deoxy-D-ribos-5-yl)-L-homocysteine = (S)-4,5-dihydroxypentane-2,3-dione + L-homocysteine. In terms of biological role, involved in the synthesis of autoinducer 2 (AI-2) which is secreted by bacteria and is used to communicate both the cell density and the metabolic potential of the environment. The regulation of gene expression in response to changes in cell density is called quorum sensing. Catalyzes the transformation of S-ribosylhomocysteine (RHC) to homocysteine (HC) and 4,5-dihydroxy-2,3-pentadione (DPD). This chain is S-ribosylhomocysteine lyase, found in Actinobacillus pleuropneumoniae serotype 5b (strain L20).